The following is a 224-amino-acid chain: MDVMKGTTTVGLICDDAVILATDKRASLGNLVADKEAKKLYKIDDYIAMTIAGSVGDAQAIVRLLIAEAKLYKMRTGRNIPPLACATLLSNILHSSRMFPFLTQIIIGGYDLLEGAKLFSLDPLGGMNEEKTFTATGSGSPIAYGVLEAGYDRDMSVEEGIKLALNALKSAMERDTFSGNGISLAVITKDGVKIFEDEEIEKILDSMKAKPKKKTTKRSRRKSK.

A propeptide spans 1–6 (removed in mature form; by autocatalysis); sequence MDVMKG. T7 functions as the Nucleophile in the catalytic mechanism.

Belongs to the peptidase T1B family. In terms of assembly, the 20S proteasome core is composed of 14 alpha and 14 beta subunits that assemble into four stacked heptameric rings, resulting in a barrel-shaped structure. The two inner rings, each composed of seven catalytic beta subunits, are sandwiched by two outer rings, each composed of seven alpha subunits. The catalytic chamber with the active sites is on the inside of the barrel. Has a gated structure, the ends of the cylinder being occluded by the N-termini of the alpha-subunits. Is capped at one or both ends by the proteasome regulatory ATPase, PAN.

Its subcellular location is the cytoplasm. The catalysed reaction is Cleavage of peptide bonds with very broad specificity.. The formation of the proteasomal ATPase PAN-20S proteasome complex, via the docking of the C-termini of PAN into the intersubunit pockets in the alpha-rings, triggers opening of the gate for substrate entry. Interconversion between the open-gate and close-gate conformations leads to a dynamic regulation of the 20S proteasome proteolysis activity. Its function is as follows. Component of the proteasome core, a large protease complex with broad specificity involved in protein degradation. The M.jannaschii proteasome is able to cleave oligopeptides after Glu, Asp, Tyr, Phe, Trp, slightly after Arg, but not after Ala. Thus, displays caspase-like and chymotrypsin-like activities and low level of trypsin-like activity. This chain is Proteasome subunit beta, found in Methanocaldococcus jannaschii (strain ATCC 43067 / DSM 2661 / JAL-1 / JCM 10045 / NBRC 100440) (Methanococcus jannaschii).